A 276-amino-acid chain; its full sequence is NH(3)-dependent NAD(+) synthetase (276 aa).

43–50 (GISGGVDS) contributes to the ATP binding site. Position 49 (D49) interacts with Mg(2+). Deamido-NAD(+) is bound at residue R146. T166 serves as a coordination point for ATP. E171 is a binding site for Mg(2+). K179 and D186 together coordinate deamido-NAD(+). ATP contacts are provided by K195 and T217. Deamido-NAD(+) is bound at residue 266–267 (HK).

Belongs to the NAD synthetase family. Homodimer.

It catalyses the reaction deamido-NAD(+) + NH4(+) + ATP = AMP + diphosphate + NAD(+) + H(+). It functions in the pathway cofactor biosynthesis; NAD(+) biosynthesis; NAD(+) from deamido-NAD(+) (ammonia route): step 1/1. Functionally, catalyzes the ATP-dependent amidation of deamido-NAD to form NAD. Uses ammonia as a nitrogen source. The polypeptide is NH(3)-dependent NAD(+) synthetase (Shewanella sediminis (strain HAW-EB3)).